The primary structure comprises 175 residues: Co-chaperone protein HscB homolog (175 aa).

In terms of domain architecture, J spans 7 to 79; it reads SHFDLFDLPA…LKRATYLLHL (73 aa).

Belongs to the HscB family. As to quaternary structure, interacts with HscA and stimulates its ATPase activity.

Functionally, co-chaperone involved in the maturation of iron-sulfur cluster-containing proteins. Seems to help targeting proteins to be folded toward HscA. This is Co-chaperone protein HscB homolog from Paraburkholderia phytofirmans (strain DSM 17436 / LMG 22146 / PsJN) (Burkholderia phytofirmans).